The following is a 329-amino-acid chain: L-threonine dehydratase catabolic TdcB (329 aa).

53–54 (RT) lines the AMP pocket. Residue lysine 58 is modified to N6-(pyridoxal phosphate)lysine. AMP is bound by residues glutamine 88, 119-120 (DY), and asparagine 314.

Belongs to the serine/threonine dehydratase family. As to quaternary structure, in the native structure, TdcB is in a dimeric form, whereas in the TdcB-AMP complex, it exists in a tetrameric form (dimer of dimers). The cofactor is pyridoxal 5'-phosphate.

It catalyses the reaction L-threonine = 2-oxobutanoate + NH4(+). The enzyme catalyses L-serine = pyruvate + NH4(+). Its pathway is amino-acid degradation; L-threonine degradation via propanoate pathway; propanoate from L-threonine: step 1/4. Each protein molecule can bind up to four molecules of AMP, which act as an allosteric activator to the enzyme. Its function is as follows. Catalyzes the anaerobic formation of alpha-ketobutyrate and ammonia from threonine in a two-step reaction. The first step involved a dehydration of threonine and a production of enamine intermediates (aminocrotonate), which tautomerizes to its imine form (iminobutyrate). Both intermediates are unstable and short-lived. The second step is the nonenzymatic hydrolysis of the enamine/imine intermediates to form 2-ketobutyrate and free ammonia. In the low water environment of the cell, the second step is accelerated by RidA. TdcB also dehydrates serine to yield pyruvate via analogous enamine/imine intermediates. In Escherichia coli O157:H7, this protein is L-threonine dehydratase catabolic TdcB (tdcB).